The sequence spans 263 residues: Benzil reductase ((S)-benzoin forming) IRC24 (263 aa).

Ile7 and Asn86 together coordinate NADP(+). Catalysis depends on Ser143, which acts as the Proton donor. Residues Tyr157, Lys161, Val190, and Thr192 each contribute to the NADP(+) site. Residue Tyr157 is the Proton acceptor of the active site. Lys161 (lowers pKa of active site Tyr) is an active-site residue.

Belongs to the short-chain dehydrogenases/reductases (SDR) family.

It carries out the reaction (S)-benzoin + NADP(+) = benzil + NADPH + H(+). It catalyses the reaction 2-hydroxy-1-phenyl-1-propanone + NADP(+) = 1-phenyl-1,2-propanedione + NADPH + H(+). Its function is as follows. Reduces benzil stereospecifically to (S)-benzoin. Also reduces 1-phenyl-1,2-propanedione to 2-hydroxy-1-phenyl-1-propanone. Is probably involved in a pathway contributing to genomic integrity. This chain is Benzil reductase ((S)-benzoin forming) IRC24 (IRC24), found in Saccharomyces cerevisiae (strain ATCC 204508 / S288c) (Baker's yeast).